A 214-amino-acid polypeptide reads, in one-letter code: Coiled-coil domain-containing protein 169 (214 aa).

A coiled-coil region spans residues 56 to 138 (SEWKTRYETQ…YAFRLEQESK (83 aa)). Residues 154 to 214 (MTQVSGSNQV…RSNHLPKLNP (61 aa)) are disordered. 2 stretches are compositionally biased toward polar residues: residues 155–166 (TQVSGSNQVSKR) and 185–195 (HNSMNQKTTNA).

Belongs to the CCDC169 family.

The polypeptide is Coiled-coil domain-containing protein 169 (Ccdc169) (Mus musculus (Mouse)).